The chain runs to 180 residues: Regulator of G-protein signaling 8 (180 aa).

Ser-26 is subject to Phosphoserine. Residues 56–171 enclose the RGS domain; sequence SFDVLLSHKY…FLRSKMYLDL (116 aa).

As to quaternary structure, interacts with GNAO1. Interacts with GNAI3.

It localises to the cell membrane. The protein localises to the membrane. It is found in the perikaryon. Its subcellular location is the cell projection. The protein resides in the dendrite. It localises to the nucleus. Functionally, regulates G protein-coupled receptor signaling cascades, including signaling via muscarinic acetylcholine receptor CHRM2 and dopamine receptor DRD2. Inhibits signal transduction by increasing the GTPase activity of G protein alpha subunits, thereby driving them into their inactive GDP-bound form. Modulates the activity of potassium channels that are activated in response to DRD2 and CHRM2 signaling. This chain is Regulator of G-protein signaling 8 (RGS8), found in Homo sapiens (Human).